Consider the following 59-residue polypeptide: Putative antitoxin AF_1090 (59 aa).

Belongs to the UPF0165 family.

Its function is as follows. Possibly the antitoxin component of a type II toxin-antitoxin (TA) system. This is Putative antitoxin AF_1090 from Archaeoglobus fulgidus (strain ATCC 49558 / DSM 4304 / JCM 9628 / NBRC 100126 / VC-16).